The primary structure comprises 414 residues: Arrestin domain-containing protein 3 (414 aa).

2 short sequence motifs (PPxY motif) span residues proline 346–tyrosine 349 and proline 391–tyrosine 394. The disordered stretch occupies residues leucine 393–arginine 414. Basic and acidic residues predominate over residues alanine 405 to arginine 414.

It belongs to the arrestin family. In terms of assembly, interacts (via PPxY motifs) with NEDD4 (via WW domains). Interacts with ADRB2. Interacts with ADRB3. Interacts with HGS (via PPxY motifs). Does not bind TXN (thioredoxin). Interacts with ITCH.

It localises to the cytoplasm. Its subcellular location is the cell membrane. The protein resides in the lysosome. It is found in the endosome. The protein localises to the early endosome. Its function is as follows. Adapter protein that plays a role in regulating cell-surface expression of adrenergic receptors and probably also other G protein-coupled receptors. Plays a role in NEDD4-mediated ubiquitination and endocytosis af activated ADRB2 and subsequent ADRB2 degradation. May recruit NEDD4 to ADRB2. Alternatively, may function as adapter protein that does not play a major role in recruiting NEDD4 to ADRB2, but rather plays a role in a targeting ADRB2 to endosomes. The chain is Arrestin domain-containing protein 3 (ARRDC3) from Bos taurus (Bovine).